A 2641-amino-acid polypeptide reads, in one-letter code: Inverse autotransporter adhesin YeeJ (2641 aa).

The N-terminal stretch at 1-25 (MGIKLRRLTAGICLITQLVFPMAAA) is a signal peptide. One can recognise a LysM domain in the interval 50-98 (VPYTLGALESAQSVAERFGISVAELRKLNQFRTFARGFDNVRQGDELDV). Residues 125–400 (TSQQIGSLLA…SRFDLVDRNN (276 aa)) are inverse autotransporter. Residues 513-605 (QKDSSVSLSS…GVDAAKAPAV (93 aa)) form an invasin 3 domain region. Big-1 domains follow at residues 617-711 (HSSI…AGFI), 721-815 (IATL…VSFV), 822-913 (QVDL…VIFI), 920-1017 (ALTL…MTFV), 1024-1116 (VVVL…VNIA), 1123-1220 (QVTL…VTFV), 1227-1319 (VVVL…VNIA), 1326-1423 (QVTL…VTFV), 1430-1523 (LVVL…VHFI), 1531-1633 (IIEL…SINV), 1641-1734 (HLTL…VTYV), 1741-1837 (EISL…VNFI), 1844-1941 (QVNL…VTLI), 1948-2032 (KLAS…PTEV), 2048-2141 (ITSL…VIDQ), 2142-2235 (KLTL…IVKV), and 2244-2336 (VASF…ITLV). The segment at 2538–2641 (KSWWVNAGDA…FAYATCYKNL (104 aa)) is C-type lectin domain.

Belongs to the intimin/invasin family.

Its subcellular location is the cell outer membrane. Functionally, a probable inverse autotransporter, it may be involved in biofilm formation and cell adhesion. May bind peptidoglycan via its LysM domain. This Escherichia coli O157:H7 protein is Inverse autotransporter adhesin YeeJ (yeeJ).